Reading from the N-terminus, the 121-residue chain is Regulator of ribonuclease activity B (121 aa).

Belongs to the RraB family. Interacts with the C-terminal region of Rne.

Its subcellular location is the cytoplasm. In terms of biological role, globally modulates RNA abundance by binding to RNase E (Rne) and regulating its endonucleolytic activity. Can modulate Rne action in a substrate-dependent manner by altering the composition of the degradosome. The protein is Regulator of ribonuclease activity B of Psychromonas ingrahamii (strain DSM 17664 / CCUG 51855 / 37).